The chain runs to 314 residues: Putative integrase/recombinase y4rB (314 aa).

In terms of domain architecture, Core-binding (CB) spans 2–79 (STFRQAVQEY…YVRVFARYRA (78 aa)). Residues 100–304 (ARPYLYSKED…SPELMKEAMR (205 aa)) enclose the Tyr recombinase domain. Residues R147, K172, H248, R251, and H282 contribute to the active site. The active-site O-(3'-phospho-DNA)-tyrosine intermediate is Y291.

Belongs to the 'phage' integrase family.

In Sinorhizobium fredii (strain NBRC 101917 / NGR234), this protein is Putative integrase/recombinase y4rB.